The chain runs to 396 residues: Alpha-galactosidase 2 (396 aa).

The first 25 residues, 1–25, serve as a signal peptide directing secretion; that stretch reads MVLLSFSLRFIAFTLTITLTQIADG. 2 disulfides stabilise this stretch: C52/C84 and C132/C163. N55 carries N-linked (GlcNAc...) asparagine glycosylation. Residues 82–83 and K159 each bind substrate; that span reads DD. D161 (nucleophile) is an active-site residue. Substrate-binding positions include 194–198, R212, and D216; that span reads EWGQE. Catalysis depends on D216, which acts as the Proton donor. 2 N-linked (GlcNAc...) asparagine glycosylation sites follow: N343 and N354.

This sequence belongs to the glycosyl hydrolase 27 family. Homodimer.

It is found in the secreted. Its subcellular location is the cell wall. The protein localises to the extracellular space. It localises to the apoplast. It carries out the reaction Hydrolysis of terminal, non-reducing alpha-D-galactose residues in alpha-D-galactosides, including galactose oligosaccharides, galactomannans and galactolipids.. In terms of biological role, may regulate leaf (and possibly other organ) development by functioning in cell wall loosening and cell wall expansion. The sequence is that of Alpha-galactosidase 2 from Arabidopsis thaliana (Mouse-ear cress).